A 331-amino-acid chain; its full sequence is Eukaryotic translation initiation factor 2 subunit 2 (331 aa).

Disordered stretches follow at residues 1-75 (MSGD…DLNF) and 97-120 (AIKD…LDIM). Ser-2 is subject to N-acetylserine. Residues Ser-2 and Ser-13 each carry the phosphoserine modification. Positions 13–22 (SKKKKKKKKP) are enriched in basic residues. A Phosphothreonine modification is found at Thr-36. Basic and acidic residues predominate over residues 40-51 (ETKEVEPEPTEE). Position 67 is a phosphoserine (Ser-67). Lys-102 participates in a covalent cross-link: Glycyl lysine isopeptide (Lys-Gly) (interchain with G-Cter in SUMO2). Ser-105 is modified (phosphoserine). The segment covering 106–118 (DAQEPAEPEDDLD) has biased composition (acidic residues). Phosphoserine is present on residues Ser-158 and Ser-216. Residues Lys-263 and Lys-291 each carry the N6-acetyllysine modification. A C4-type zinc finger spans residues 279-303 (CHTCRSPDTILQKDTRLYFLQCETC).

It belongs to the eIF-2-beta/eIF-5 family. Eukaryotic translation initiation factor 2 eIF2 is a heterotrimeric complex composed of an alpha (EIF2S1), a beta (EIF2S2) and a gamma (EIF2S3) chain. eIF2 is member of the 43S pre-initiation complex (43S PIC). eIF2 forms a complex with at least CELF1/CUGBP1, CALR, CALR3, EIF2S1, EIF2S2, HSP90B1 and HSPA5. Interacts with BZW2/5MP1. Interacts with EIF5.

It localises to the cytoplasm. It is found in the cytosol. Component of the eIF2 complex that functions in the early steps of protein synthesis by forming a ternary complex with GTP and initiator tRNA. This complex binds to a 40S ribosomal subunit, followed by mRNA binding to form the 43S pre-initiation complex (43S PIC). Junction of the 60S ribosomal subunit to form the 80S initiation complex is preceded by hydrolysis of the GTP bound to eIF2 and release of an eIF2-GDP binary complex. In order for eIF2 to recycle and catalyze another round of initiation, the GDP bound to eIF2 must exchange with GTP by way of a reaction catalyzed by eIF2B. The sequence is that of Eukaryotic translation initiation factor 2 subunit 2 (Eif2s2) from Mus musculus (Mouse).